The sequence spans 842 residues: MNKITKYIDALPLSDAEKSALPDTSLQAVHQALDDDHQTFAREDDSPLGSVKARLAHSWPDSLSGDQLVKDDEGRTQLHAMPKAKRSSMIPDPWRTNPVGRFWDRLRGRDVTPRYLSRLTQEERESEQKWRTVGTIRRYILLLLTLSQTVVATWYMKTILPYQGWALINPADMVGQNLWISFMQLLPYVLQSGILILFAVLFCWVSAGFWTALMGFLQLLIGRDKYSISASTVGDEPLNPAHRTALIMPICNEDVDRVFAGLRATWESVKATGNAAHFDVYILSDSYNPDICVAEQKAWMELIAEVQGEGQIFYRRRRRRVKRKSGNIDDFCRRWGSQYSYMVVLDADSVMTGECLSSLVRLMEANPNAGIIQSSPRASGMDTLYARCQQFATRVYGPLFTAGLHFWQLGESHYWGHNAIIRVKPFIEHCALAPLPGEGNFAGSILSHDFVEAALMRRAGWGVWIAYDLPGSYEELPPNLLDELKRDRRWCQGNLMNFRLFLVRGMHPVHRAVFLTGVMSYLSAPLWFMFLALSTALQVVHALTEPQYFLQPRQLFPVWPQWRPELAIALFASTMVLLFLPKLLSIILVWCKGPKEYGGFFRVTLSLLLEVLFSVLLAPVRMLFHTVFVVSAFLGWEVVWNSPQRDDDSTPWGEAFMRHGSQLLLGLVWAVGMAWLDLRFLFWLAPIVVSLILSPFVSAISSRATVGLRTKRWKLFLIPEEYSPPQVLKDTDAYLTMNRQRSLDDGFMHAVFNPSFNALATAMATARHRQGHILEIARERHVEQALNETPDKLNRDRRLVLLSDPVTMSRLHYRVWAAPEKYSSWVNAYQQLALNPLALKTK.

Helical transmembrane passes span 140 to 160, 194 to 214, 513 to 533, 568 to 588, 615 to 635, 656 to 676, and 680 to 700; these read ILLLLTLSQTVVATWYMKTIL, ILILFAVLFCWVSAGFWTALM, VFLTGVMSYLSAPLWFMFLAL, IALFASTMVLLFLPKLLSIIL, VLLAPVRMLFHTVFVVSAFLG, FMRHGSQLLLGLVWAVGMAWL, and FLFWLAPIVVSLILSPFVSAI.

The protein belongs to the glycosyltransferase 2 family. OpgH subfamily.

It localises to the cell inner membrane. Its pathway is glycan metabolism; osmoregulated periplasmic glucan (OPG) biosynthesis. Involved in the biosynthesis of osmoregulated periplasmic glucans (OPGs). The sequence is that of Glucans biosynthesis glucosyltransferase H from Klebsiella pneumoniae subsp. pneumoniae (strain ATCC 700721 / MGH 78578).